The following is a 643-amino-acid chain: Phosphomethylpyrimidine synthase (643 aa).

Substrate is bound by residues Asn248, Met277, Tyr306, His342, 362-364, 403-406, and Glu442; these read SRG and DGLR. Residue His446 coordinates Zn(2+). Tyr469 is a substrate binding site. His510 lines the Zn(2+) pocket. Positions 590, 593, and 598 each coordinate [4Fe-4S] cluster.

The protein belongs to the ThiC family. As to quaternary structure, homodimer. [4Fe-4S] cluster serves as cofactor.

The catalysed reaction is 5-amino-1-(5-phospho-beta-D-ribosyl)imidazole + S-adenosyl-L-methionine = 4-amino-2-methyl-5-(phosphooxymethyl)pyrimidine + CO + 5'-deoxyadenosine + formate + L-methionine + 3 H(+). It participates in cofactor biosynthesis; thiamine diphosphate biosynthesis. Its function is as follows. Catalyzes the synthesis of the hydroxymethylpyrimidine phosphate (HMP-P) moiety of thiamine from aminoimidazole ribotide (AIR) in a radical S-adenosyl-L-methionine (SAM)-dependent reaction. The sequence is that of Phosphomethylpyrimidine synthase from Burkholderia ambifaria (strain ATCC BAA-244 / DSM 16087 / CCUG 44356 / LMG 19182 / AMMD) (Burkholderia cepacia (strain AMMD)).